A 274-amino-acid polypeptide reads, in one-letter code: 3-methyl-2-oxobutanoate hydroxymethyltransferase (274 aa).

2 residues coordinate Mg(2+): D49 and D88. Residues 49-50 (DS), D88, and K118 contribute to the 3-methyl-2-oxobutanoate site. E120 provides a ligand contact to Mg(2+). E187 serves as the catalytic Proton acceptor.

Belongs to the PanB family. In terms of assembly, homodecamer; pentamer of dimers. The cofactor is Mg(2+).

The protein resides in the cytoplasm. The catalysed reaction is 3-methyl-2-oxobutanoate + (6R)-5,10-methylene-5,6,7,8-tetrahydrofolate + H2O = 2-dehydropantoate + (6S)-5,6,7,8-tetrahydrofolate. It functions in the pathway cofactor biosynthesis; (R)-pantothenate biosynthesis; (R)-pantoate from 3-methyl-2-oxobutanoate: step 1/2. Its function is as follows. Catalyzes the reversible reaction in which hydroxymethyl group from 5,10-methylenetetrahydrofolate is transferred onto alpha-ketoisovalerate to form ketopantoate. This chain is 3-methyl-2-oxobutanoate hydroxymethyltransferase, found in Rhodopseudomonas palustris (strain BisB18).